A 184-amino-acid polypeptide reads, in one-letter code: Peptide deformylase (184 aa).

C111 and H154 together coordinate Fe cation. The active site involves E155. H158 lines the Fe cation pocket.

This sequence belongs to the polypeptide deformylase family. Fe(2+) is required as a cofactor.

The catalysed reaction is N-terminal N-formyl-L-methionyl-[peptide] + H2O = N-terminal L-methionyl-[peptide] + formate. Functionally, removes the formyl group from the N-terminal Met of newly synthesized proteins. Requires at least a dipeptide for an efficient rate of reaction. N-terminal L-methionine is a prerequisite for activity but the enzyme has broad specificity at other positions. The sequence is that of Peptide deformylase from Lactobacillus gasseri (strain ATCC 33323 / DSM 20243 / BCRC 14619 / CIP 102991 / JCM 1131 / KCTC 3163 / NCIMB 11718 / NCTC 13722 / AM63).